The following is a 505-amino-acid chain: MFKAAMDASNETNPNYPKFAHLLSQGWMFGRKVDNSDQQYRFFRDNFPLLCGLVLLHTSLRRGVNLIAGNHKRTGFDFVFGXDIHLCSTRDEFLPYFDSLGYXIFPFLKYIKRNDVATXTYVDXTAILSLFLNDNYXSCTIWNRFYRSWISEVSFQDGMCFSISHCXRMLSYNLDYIEKRKSASEESNLELKNSSSSLSELDDRERLVAPIPLTDYNFVNYMAYITYAPLFIAGPIITFNDYIYQSDYKAMSSVKDYKRTFIYFLRFAFCILVMEFLLHFMYVVAVSKTKAWEGDTPFQLSMLGLFNLNIIWLKLLIPWRLFRLWSLIDGIDPPENMIRCMDNNFSTLAFWRAWHRSYNRWIIRYIYIPLGGGGKYRILNSLCVFSFVAIWHDIELKLLMWGWLVVIFIIPELAATAIFKNYQHEPWYRHVCALGAVINIWMMMLANLFGFCMGKDGTMSLIKTLFTTAVGLRFLFLSLGALFVGSQVMFELREAEKRRGVNVKC.

Residues 1–217 (MFKAAMDASN…VAPIPLTDYN (217 aa)) are Extracellular-facing. Residues 218–238 (FVNYMAYITYAPLFIAGPIIT) form a helical membrane-spanning segment. The Cytoplasmic portion of the chain corresponds to 239-266 (FNDYIYQSDYKAMSSVKDYKRTFIYFLR). A helical transmembrane segment spans residues 267-287 (FAFCILVMEFLLHFMYVVAVS). Over 288-296 (KTKAWEGDT) the chain is Extracellular. A helical membrane pass occupies residues 297–317 (PFQLSMLGLFNLNIIWLKLLI). The Cytoplasmic segment spans residues 318 to 377 (PWRLFRLWSLIDGIDPPENMIRCMDNNFSTLAFWRAWHRSYNRWIIRYIYIPLGGGGKYR). 2 helical membrane passes run 378–398 (ILNS…ELKL) and 399–419 (LMWG…TAIF). His392 is an active-site residue. The Cytoplasmic portion of the chain corresponds to 420–430 (KNYQHEPWYRH). A helical transmembrane segment spans residues 431–451 (VCALGAVINIWMMMLANLFGF). Residues 452–464 (CMGKDGTMSLIKT) are Extracellular-facing. Residues 465–485 (LFTTAVGLRFLFLSLGALFVG) traverse the membrane as a helical segment. The Cytoplasmic segment spans residues 486–505 (SQVMFELREAEKRRGVNVKC).

Belongs to the membrane-bound acyltransferase family.

It localises to the cell membrane. The protein localises to the endoplasmic reticulum membrane. Its subcellular location is the mitochondrion membrane. In terms of biological role, membrane-bound O-acyltransferase involved in the remodeling of glycosylphosphatidylinositol (GPI) anchors. Acts only on GPI-anchored proteins, but not on free GPI lipids. Also involved in lipid metabolism, having profound effects on sphingolipid-sterol-ordered domains integrity and assembly. Involved in cell integrity and apoptosis. This Millerozyma farinosa (Yeast) protein is Membrane-bound O-acyltransferase GUP1 (GUP1).